The chain runs to 149 residues: Large ribosomal subunit protein bL9 (149 aa).

This sequence belongs to the bacterial ribosomal protein bL9 family.

Its function is as follows. Binds to the 23S rRNA. This Endomicrobium trichonymphae protein is Large ribosomal subunit protein bL9.